The following is a 444-amino-acid chain: tRNA-2-methylthio-N(6)-dimethylallyladenosine synthase (444 aa).

The MTTase N-terminal domain maps to 7–121 (KTFHVKSFGC…LPELIARAER (115 aa)). [4Fe-4S] cluster contacts are provided by Cys-16, Cys-52, Cys-84, Cys-158, Cys-162, and Cys-165. The region spanning 144–376 (GNQRPTAFLT…QALLNEQQQA (233 aa)) is the Radical SAM core domain. The TRAM domain occupies 379–441 (EATVGRTTRL…PNSLGAEPLM (63 aa)).

It belongs to the methylthiotransferase family. MiaB subfamily. As to quaternary structure, monomer. Requires [4Fe-4S] cluster as cofactor.

The protein resides in the cytoplasm. It catalyses the reaction N(6)-dimethylallyladenosine(37) in tRNA + (sulfur carrier)-SH + AH2 + 2 S-adenosyl-L-methionine = 2-methylsulfanyl-N(6)-dimethylallyladenosine(37) in tRNA + (sulfur carrier)-H + 5'-deoxyadenosine + L-methionine + A + S-adenosyl-L-homocysteine + 2 H(+). Catalyzes the methylthiolation of N6-(dimethylallyl)adenosine (i(6)A), leading to the formation of 2-methylthio-N6-(dimethylallyl)adenosine (ms(2)i(6)A) at position 37 in tRNAs that read codons beginning with uridine. The sequence is that of tRNA-2-methylthio-N(6)-dimethylallyladenosine synthase from Sphingopyxis alaskensis (strain DSM 13593 / LMG 18877 / RB2256) (Sphingomonas alaskensis).